The following is a 98-amino-acid chain: U11-barytoxin-Tl1b (98 aa).

The first 21 residues, Met1–Ala21, serve as a signal peptide directing secretion. A propeptide spanning residues Ser22 to Arg50 is cleaved from the precursor. 3 cysteine pairs are disulfide-bonded: Cys57/Cys71, Cys64/Cys76, and Cys70/Cys89.

The protein belongs to the neurotoxin 10 (Hwtx-1) family. 25 (ICK4) subfamily. As to expression, expressed by the venom gland.

Its subcellular location is the secreted. Ion channel inhibitor. The sequence is that of U11-barytoxin-Tl1b from Trittame loki (Brush-footed trapdoor spider).